The following is a 451-amino-acid chain: Glycylpeptide N-tetradecanoyltransferase (451 aa).

Tetradecanoyl-CoA is bound by residues 177-179 (LCI) and 185-189 (NKRLA). Leu-451 serves as the catalytic Proton acceptor; via carboxylate.

Belongs to the NMT family. As to quaternary structure, monomer.

The protein localises to the cytoplasm. The enzyme catalyses N-terminal glycyl-[protein] + tetradecanoyl-CoA = N-tetradecanoylglycyl-[protein] + CoA + H(+). Its activity is regulated as follows. Competitively inhibited by SC-58272, a peptidomimetic derived from the N-terminal sequence of a natural substrate. In terms of biological role, adds a myristoyl group to the N-terminal glycine residue of certain cellular proteins. Substrate specificity requires an N-terminal glycine in the nascent polypeptide substrates. Ser is present at position 5 in almost all known N-myristoyl proteins and Lys is commonly encountered at postion 6. Basic residues are preferred at positions 7 and 8. This Candida albicans (strain SC5314 / ATCC MYA-2876) (Yeast) protein is Glycylpeptide N-tetradecanoyltransferase (NMT1).